Here is a 153-residue protein sequence, read N- to C-terminus: Cornifin-B (153 aa).

Disordered stretches follow at residues 1–35 (MSSHQQKQPCTAPPQLHEQQVKQPCQPPPPEPCVS) and 49–85 (CHPKAPEPCHPKAPEPCHPKAPEPCHPKAPEPCHPKA). 14 repeat units span residues 27–34 (PPPPEPCV), 35–42 (SQVKTPCD), 43–50 (TKVPEPCH), 51–58 (PKAPEPCH), 59–66 (PKAPEPCH), 67–74 (PKAPEPCH), 75–82 (PKAPEPCH), 83–90 (PKAPEPCH), 91–98 (PKAPEPCH), 99–106 (PKAPEPCH), 107–114 (PKAPEPCH), 115–122 (PKVPEPCL), 123–130 (PKAPEPCQ), and 131–138 (PIVPEPCP). The 14 X 8 AA approximate tandem repeats stretch occupies residues 27–138 (PPPPEPCVSQ…CQPIVPEPCP (112 aa)).

Belongs to the cornifin (SPRR) family. In terms of tissue distribution, expressed in fetal periderm, hair follicles and in the thickened epidermis of the lip and footpad. Also present in the epithelia of various tissues such as the penis, vagina, forestomach, tongue and esophagus.

It is found in the cytoplasm. Functionally, cross-linked envelope protein of keratinocytes. It is a keratinocyte protein that first appears in the cell cytosol, but ultimately becomes cross-linked to membrane proteins by transglutaminase. All that results in the formation of an insoluble envelope beneath the plasma membrane. In Mus musculus (Mouse), this protein is Cornifin-B (Sprr1b).